Here is a 333-residue protein sequence, read N- to C-terminus: MLRIAIDAMGGDFGPEPIIEGLVLALRKNNNFTAIAVGNKEQLLPLIPQGLLPRIEILDTNDVISMHDNATDALKRKDSTIYKAIELVREGNADAVVSAGHSGASMSLATLRIGRIKGVSRPAIATLMPTSENQNTLVLDVGANVDSDAKNLFEFAVMGQVYAQYALRLDEPIVGLLSNGEEDSKGNEVTKEAYKLLSKLPGFAGNVEGSDIFKGTVDVVVCDGFIGNILLKTAEGVADTIGKIIKKNLKRSLISIAGAVLMRKVFKNLKVRVDYAEYGGAPLLGVKAPVIISHGKSNSKAIQNAIFQAINAASSNLDSIIEQRLVEYSNKID.

It belongs to the PlsX family. In terms of assembly, homodimer. Probably interacts with PlsY.

Its subcellular location is the cytoplasm. It catalyses the reaction a fatty acyl-[ACP] + phosphate = an acyl phosphate + holo-[ACP]. Its pathway is lipid metabolism; phospholipid metabolism. Catalyzes the reversible formation of acyl-phosphate (acyl-PO(4)) from acyl-[acyl-carrier-protein] (acyl-ACP). This enzyme utilizes acyl-ACP as fatty acyl donor, but not acyl-CoA. This chain is Phosphate acyltransferase, found in Aliarcobacter butzleri (strain RM4018) (Arcobacter butzleri).